A 334-amino-acid chain; its full sequence is Malate dehydrogenase 2 (334 aa).

Ile19–Gly25 lines the NAD(+) pocket. Positions 100 and 106 each coordinate substrate. Residues Asn113 and Val136 to Asn138 contribute to the NAD(+) site. Substrate-binding residues include Asn138 and Arg169. The active-site Proton acceptor is His193.

The protein belongs to the LDH/MDH superfamily.

The enzyme catalyses (S)-malate + NAD(+) = oxaloacetate + NADH + H(+). Its function is as follows. Catalyzes the reversible oxidation of malate to oxaloacetate. In Aquifex aeolicus (strain VF5), this protein is Malate dehydrogenase 2.